The sequence spans 576 residues: Insulin-like growth factor 2 mRNA-binding protein 1 (576 aa).

RRM domains follow at residues Asn-2 to Pro-75 and Arg-81 to Asp-156. The interval Gln-158–Val-189 is disordered. KH domains are found at residues Asp-195–Ile-260 and Glu-276–Ile-343. Tyr-396 bears the Phosphotyrosine; by SRC mark. KH domains lie at Gln-404 to Ile-469 and Lys-486 to Ile-552.

Belongs to the RRM IMP/VICKZ family. Can form homooligomers and heterooligomers with IGF2BP1 and IGF2BP3 in an RNA-dependent manner. Associates with the cytoskeleton, predominantly with actin filament bundles and occasionally with microtubules. In a heterologous system, interacts with ELAVL1, DHX9 and HNRNPU. In terms of processing, phosphorylated by SRC at Tyr-396. This residue is involved in ACTB mRNA binding, its phosphorylation impairs association with ACTB mRNA and hence abolishes translational repression. Phosphorylation occurs in close proximity to filopodia and in the growth cones of differentiated neuroglioblastoma cells. In terms of tissue distribution, expressed in neurons and embryonic fibroblasts (at protein level).

The protein localises to the nucleus. The protein resides in the cytoplasm. It is found in the perinuclear region. It localises to the P-body. Its subcellular location is the stress granule. The protein localises to the cell projection. The protein resides in the growth cone. It is found in the filopodium. It localises to the lamellipodium. Functionally, RNA-binding factor that recruits target transcripts to cytoplasmic protein-RNA complexes (mRNPs). This transcript 'caging' into mRNPs allows mRNA transport and transient storage. It also modulates the rate and location at which target transcripts encounter the translational apparatus and shields them from endonuclease attacks or microRNA-mediated degradation. Preferentially binds to N6-methyladenosine (m6A)-containing mRNAs and increases their stability. Plays a direct role in the transport and translation of transcripts required for axonal regeneration in adult sensory neurons. Regulates localized beta-actin/ACTB mRNA translation in polarized cells, a crucial process for cell migration and neurite outgrowth. Co-transcriptionally associates with the ACTB mRNA in the nucleus. This binding involves by a conserved 54-nucleotide element in the ACTB mRNA 3'-UTR, known as the 'zipcode'. The ribonucleoparticle (RNP) thus formed is exported to the cytoplasm, binds to a motor protein and is transported along the cytoskeleton to the cell periphery. During transport, IGF2BP1 prevents beta-actin mRNA from being translated into protein. When the RNP complex reaches its destination near the plasma membrane, IGF2BP1 is phosphorylated by SRC. This releases the mRNA, allowing ribosomal 40S and 60S subunits to assemble and initiate ACTB protein synthesis. The monomeric ACTB protein then assembles into the subcortical actin cytoskeleton, which pushes the leading edge onwards. Binds MYC mRNA. Binding to MYC mRNA is enhanced by m6A-modification of the CRD. Promotes the directed movement of cells by fine-tuning intracellular signaling networks. Binds to MAPK4 3'-UTR and inhibits its translation. Interacts with PTEN transcript open reading frame (ORF) and prevents mRNA decay. This combined action on MAPK4 (down-regulation) and PTEN (up-regulation) antagonizes HSPB1 phosphorylation, consequently it prevents G-actin sequestration by phosphorylated HSPB1, allowing F-actin polymerization. Hence enhances the velocity of cell migration and stimulates directed cell migration by PTEN-modulated polarization. The sequence is that of Insulin-like growth factor 2 mRNA-binding protein 1 (IGF2BP1) from Gallus gallus (Chicken).